A 496-amino-acid chain; its full sequence is Probable CtpA-like serine protease (496 aa).

The segment covering 1-16 has biased composition (basic and acidic residues); the sequence is MDDKQHTSSSDDERAE. The disordered stretch occupies residues 1-27; that stretch reads MDDKQHTSSSDDERAEIATSNQDQETN. Over residues 18–27 the composition is skewed to polar residues; that stretch reads ATSNQDQETN. The helical transmembrane segment at 39–59 threads the bilayer; that stretch reads FISILIGTILITAVITVVAYI. One can recognise a PDZ domain in the interval 124–206; sequence TKSFNEGVSG…TEVTLTVQRG (83 aa). Residues S329, D340, and K354 each act as charge relay system in the active site.

Belongs to the peptidase S41A family.

Its subcellular location is the cell membrane. This is Probable CtpA-like serine protease from Staphylococcus aureus (strain COL).